A 911-amino-acid polypeptide reads, in one-letter code: Probable 2-oxoadipate dehydrogenase complex component E1 homolog (911 aa).

The protein belongs to the alpha-ketoglutarate dehydrogenase family. Requires thiamine diphosphate as cofactor.

It localises to the mitochondrion. The catalysed reaction is N(6)-[(R)-lipoyl]-L-lysyl-[protein] + 2-oxoadipate + H(+) = N(6)-[(R)-S(8)-glutaryldihydrolipoyl]-L-lysyl-[protein] + CO2. In terms of biological role, 2-oxoadipate dehydrogenase (E1a) component of the 2-oxoadipate dehydrogenase complex (OADHC). Participates in the first step, rate limiting for the overall conversion of 2-oxoadipate (alpha-ketoadipate) to glutaryl-CoA and CO(2) catalyzed by the whole OADHC. Catalyzes the irreversible decarboxylation of 2-oxoadipate via the thiamine diphosphate (ThDP) cofactor and subsequent transfer of the decarboxylated acyl intermediate on an oxidized dihydrolipoyl group that is covalently amidated to the E2 enzyme (dihydrolipoyllysine-residue succinyltransferase or DLST). This chain is Probable 2-oxoadipate dehydrogenase complex component E1 homolog, found in Caenorhabditis elegans.